Consider the following 141-residue polypeptide: Large ribosomal subunit protein uL11 (141 aa).

This sequence belongs to the universal ribosomal protein uL11 family. Part of the ribosomal stalk of the 50S ribosomal subunit. Interacts with L10 and the large rRNA to form the base of the stalk. L10 forms an elongated spine to which L12 dimers bind in a sequential fashion forming a multimeric L10(L12)X complex. One or more lysine residues are methylated.

In terms of biological role, forms part of the ribosomal stalk which helps the ribosome interact with GTP-bound translation factors. This chain is Large ribosomal subunit protein uL11, found in Kosmotoga olearia (strain ATCC BAA-1733 / DSM 21960 / TBF 19.5.1).